The following is a 1395-amino-acid chain: DNA-directed RNA polymerase subunit beta' (1395 aa).

Zn(2+) is bound by residues C70, C72, C85, and C88. Positions 460, 462, and 464 each coordinate Mg(2+). Zn(2+) contacts are provided by C814, C888, C895, and C898.

It belongs to the RNA polymerase beta' chain family. In terms of assembly, the RNAP catalytic core consists of 2 alpha, 1 beta, 1 beta' and 1 omega subunit. When a sigma factor is associated with the core the holoenzyme is formed, which can initiate transcription. Requires Mg(2+) as cofactor. The cofactor is Zn(2+).

It carries out the reaction RNA(n) + a ribonucleoside 5'-triphosphate = RNA(n+1) + diphosphate. Functionally, DNA-dependent RNA polymerase catalyzes the transcription of DNA into RNA using the four ribonucleoside triphosphates as substrates. This Pseudoalteromonas atlantica (strain T6c / ATCC BAA-1087) protein is DNA-directed RNA polymerase subunit beta'.